Reading from the N-terminus, the 664-residue chain is Methionine--tRNA ligase (664 aa).

The 'HIGH' region motif lies at 13–23 (PYTNGPCHIGH). Positions 144, 147, 156, and 160 each coordinate Zn(2+). A 'KMSKS' region motif is present at residues 327 to 331 (KFSKS). Lys-330 is a binding site for ATP. One can recognise a tRNA-binding domain in the interval 566–664 (EFGNLDIRIA…RPVKPGTKIR (99 aa)).

This sequence belongs to the class-I aminoacyl-tRNA synthetase family. MetG type 1 subfamily. As to quaternary structure, homodimer. Zn(2+) serves as cofactor.

It localises to the cytoplasm. The enzyme catalyses tRNA(Met) + L-methionine + ATP = L-methionyl-tRNA(Met) + AMP + diphosphate. Its function is as follows. Is required not only for elongation of protein synthesis but also for the initiation of all mRNA translation through initiator tRNA(fMet) aminoacylation. The protein is Methionine--tRNA ligase of Methanoculleus marisnigri (strain ATCC 35101 / DSM 1498 / JR1).